We begin with the raw amino-acid sequence, 231 residues long: 7-cyano-7-deazaguanine synthase (231 aa).

An ATP-binding site is contributed by 8-18 (FSGGQDSTTCL). Zn(2+) is bound by residues C188, C197, C200, and C203.

The protein belongs to the QueC family. Zn(2+) serves as cofactor.

It carries out the reaction 7-carboxy-7-deazaguanine + NH4(+) + ATP = 7-cyano-7-deazaguanine + ADP + phosphate + H2O + H(+). Its pathway is purine metabolism; 7-cyano-7-deazaguanine biosynthesis. In terms of biological role, catalyzes the ATP-dependent conversion of 7-carboxy-7-deazaguanine (CDG) to 7-cyano-7-deazaguanine (preQ(0)). The sequence is that of 7-cyano-7-deazaguanine synthase from Citrobacter koseri (strain ATCC BAA-895 / CDC 4225-83 / SGSC4696).